The following is a 202-amino-acid chain: Imidazole glycerol phosphate synthase subunit HisH (202 aa).

One can recognise a Glutamine amidotransferase type-1 domain in the interval Arg3–Cys202. Cys79 (nucleophile) is an active-site residue. Catalysis depends on residues His183 and Glu185.

In terms of assembly, heterodimer of HisH and HisF.

The protein resides in the cytoplasm. The enzyme catalyses 5-[(5-phospho-1-deoxy-D-ribulos-1-ylimino)methylamino]-1-(5-phospho-beta-D-ribosyl)imidazole-4-carboxamide + L-glutamine = D-erythro-1-(imidazol-4-yl)glycerol 3-phosphate + 5-amino-1-(5-phospho-beta-D-ribosyl)imidazole-4-carboxamide + L-glutamate + H(+). It catalyses the reaction L-glutamine + H2O = L-glutamate + NH4(+). Its pathway is amino-acid biosynthesis; L-histidine biosynthesis; L-histidine from 5-phospho-alpha-D-ribose 1-diphosphate: step 5/9. IGPS catalyzes the conversion of PRFAR and glutamine to IGP, AICAR and glutamate. The HisH subunit catalyzes the hydrolysis of glutamine to glutamate and ammonia as part of the synthesis of IGP and AICAR. The resulting ammonia molecule is channeled to the active site of HisF. The protein is Imidazole glycerol phosphate synthase subunit HisH of Methanosarcina acetivorans (strain ATCC 35395 / DSM 2834 / JCM 12185 / C2A).